The sequence spans 399 residues: Methylthioribose kinase (399 aa).

ATP contacts are provided by residues Asn-40, Lys-57, and Glu-111 to Leu-113. Asp-229 provides a ligand contact to substrate. Asp-246–Glu-248 is a binding site for ATP. Residue Arg-344 coordinates substrate.

The protein belongs to the methylthioribose kinase family. In terms of assembly, homodimer.

It catalyses the reaction 5-(methylsulfanyl)-D-ribose + ATP = 5-(methylsulfanyl)-alpha-D-ribose 1-phosphate + ADP + H(+). It participates in amino-acid biosynthesis; L-methionine biosynthesis via salvage pathway; S-methyl-5-thio-alpha-D-ribose 1-phosphate from S-methyl-5'-thioadenosine (hydrolase route): step 2/2. Functionally, catalyzes the phosphorylation of methylthioribose into methylthioribose-1-phosphate. The polypeptide is Methylthioribose kinase (Cronobacter sakazakii (strain ATCC BAA-894) (Enterobacter sakazakii)).